A 267-amino-acid polypeptide reads, in one-letter code: tRNA-cytidine(32) 2-sulfurtransferase (267 aa).

Residues 37–42 (SGGKDS) carry the PP-loop motif motif. 3 residues coordinate [4Fe-4S] cluster: Cys112, Cys115, and Cys203.

The protein belongs to the TtcA family. As to quaternary structure, homodimer. Mg(2+) is required as a cofactor. Requires [4Fe-4S] cluster as cofactor.

Its subcellular location is the cytoplasm. It catalyses the reaction cytidine(32) in tRNA + S-sulfanyl-L-cysteinyl-[cysteine desulfurase] + AH2 + ATP = 2-thiocytidine(32) in tRNA + L-cysteinyl-[cysteine desulfurase] + A + AMP + diphosphate + H(+). It functions in the pathway tRNA modification. In terms of biological role, catalyzes the ATP-dependent 2-thiolation of cytidine in position 32 of tRNA, to form 2-thiocytidine (s(2)C32). The sulfur atoms are provided by the cysteine/cysteine desulfurase (IscS) system. In Dichelobacter nodosus (strain VCS1703A), this protein is tRNA-cytidine(32) 2-sulfurtransferase.